We begin with the raw amino-acid sequence, 365 residues long: uncharacterized protein (365 aa).

A Radical SAM core domain is found at 45-289; sequence FSIGKSLTII…LKEVKKSNPK (245 aa). 3 residues coordinate [4Fe-4S] cluster: cysteine 60, cysteine 68, and cysteine 71.

The cofactor is [4Fe-4S] cluster.

This is an uncharacterized protein from Methanocaldococcus jannaschii (strain ATCC 43067 / DSM 2661 / JAL-1 / JCM 10045 / NBRC 100440) (Methanococcus jannaschii).